A 344-amino-acid chain; its full sequence is Arginine N-succinyltransferase (344 aa).

L125 contributes to the succinyl-CoA binding site. The active-site Proton donor is H229.

It belongs to the arginine N-succinyltransferase family.

The enzyme catalyses succinyl-CoA + L-arginine = N(2)-succinyl-L-arginine + CoA + H(+). The protein operates within amino-acid degradation; L-arginine degradation via AST pathway; L-glutamate and succinate from L-arginine: step 1/5. Its function is as follows. Catalyzes the transfer of succinyl-CoA to arginine to produce N(2)-succinylarginine. The polypeptide is Arginine N-succinyltransferase (Escherichia coli (strain UTI89 / UPEC)).